The following is a 388-amino-acid chain: Succinate--CoA ligase [ADP-forming] subunit beta (388 aa).

The ATP-grasp domain maps to 9-244 (KEIFRSMGVA…LEEEDPKEIE (236 aa)). ATP is bound by residues Lys-46, 53-55 (GRG), Glu-99, Cys-102, and Glu-107. Positions 199 and 213 each coordinate Mg(2+). Residues Asn-264 and 321-323 (GIM) contribute to the substrate site.

It belongs to the succinate/malate CoA ligase beta subunit family. As to quaternary structure, heterotetramer of two alpha and two beta subunits. Mg(2+) serves as cofactor.

The catalysed reaction is succinate + ATP + CoA = succinyl-CoA + ADP + phosphate. It carries out the reaction GTP + succinate + CoA = succinyl-CoA + GDP + phosphate. It participates in carbohydrate metabolism; tricarboxylic acid cycle; succinate from succinyl-CoA (ligase route): step 1/1. Functionally, succinyl-CoA synthetase functions in the citric acid cycle (TCA), coupling the hydrolysis of succinyl-CoA to the synthesis of either ATP or GTP and thus represents the only step of substrate-level phosphorylation in the TCA. The beta subunit provides nucleotide specificity of the enzyme and binds the substrate succinate, while the binding sites for coenzyme A and phosphate are found in the alpha subunit. The sequence is that of Succinate--CoA ligase [ADP-forming] subunit beta from Staphylococcus haemolyticus (strain JCSC1435).